The following is a 187-amino-acid chain: EP300-interacting inhibitor of differentiation 1 (187 aa).

The segment at 1–118 is disordered; sequence MSEMAELSEL…YDYPEEEQLS (118 aa). Composition is skewed to acidic residues over residues 52–63 and 93–116; these read LEEEGPMEEEEA and FESE…EEEQ. The tract at residues 54–120 is interaction with NR0B2; sequence EEGPMEEEEA…YPEEEQLSGA (67 aa). The LXCXE motif motif lies at 178-182; it reads LGCDE.

In terms of assembly, interacts via its LXCXE motif with the entire pocket region of RB1. Interacts with EP300, NR0B2 and TRIM27. Post-translationally, ubiquitinated in U2OS osteosarcoma cells and is rapidly degraded by proteasome as cells exit the cell cycle exit. In terms of tissue distribution, widely expressed. Most abundantly expressed in heart, skeletal muscle, pancreas, brain and testis. Expressed at much lower levels in placenta and peripheral blood leukocyte. Barely detectable in lung. Also weakly expressed in lung carcinoma A-549 and various leukemia cell lines.

Its subcellular location is the nucleus. It localises to the cytoplasm. Functionally, interacts with RB1 and EP300 and acts as a repressor of MYOD1 transactivation. Inhibits EP300 and CBP histone acetyltransferase activity. May be involved in coupling cell cycle exit to the transcriptional activation of genes required for cellular differentiation. May act as a candidate coinhibitory factor for NR0B2 that can be directly linked to transcription inhibitory mechanisms. The sequence is that of EP300-interacting inhibitor of differentiation 1 from Homo sapiens (Human).